Consider the following 186-residue polypeptide: Inosine/xanthosine triphosphatase (186 aa).

Q75 is a Mg(2+) binding site.

The protein belongs to the YjjX NTPase family. Homodimer. It depends on Mg(2+) as a cofactor. Mn(2+) is required as a cofactor.

It carries out the reaction XTP + H2O = XDP + phosphate + H(+). The catalysed reaction is ITP + H2O = IDP + phosphate + H(+). Functionally, phosphatase that hydrolyzes non-canonical purine nucleotides such as XTP and ITP to their respective diphosphate derivatives. Probably excludes non-canonical purines from DNA/RNA precursor pool, thus preventing their incorporation into DNA/RNA and avoiding chromosomal lesions. The chain is Inosine/xanthosine triphosphatase from Shewanella baltica (strain OS195).